The sequence spans 365 residues: Aspartate-semialdehyde dehydrogenase (365 aa).

Residues threonine 13, glycine 14, serine 15, valine 16, serine 38, serine 41, leucine 85, and aspartate 86 each contribute to the NADP(+) site. At threonine 13 the chain carries Phosphothreonine. Cysteine 156 (acyl-thioester intermediate) is an active-site residue. Glycine 188 is an NADP(+) binding site. The active-site Proton acceptor is the histidine 256. Phosphoserine occurs at positions 318 and 323. Asparagine 343 is an NADP(+) binding site.

It belongs to the aspartate-semialdehyde dehydrogenase family. As to quaternary structure, homotetramer.

Its subcellular location is the cytoplasm. It localises to the cytosol. The protein localises to the nucleus. It carries out the reaction L-aspartate 4-semialdehyde + phosphate + NADP(+) = 4-phospho-L-aspartate + NADPH + H(+). Its pathway is amino-acid biosynthesis; L-methionine biosynthesis via de novo pathway; L-homoserine from L-aspartate: step 2/3. The protein operates within amino-acid biosynthesis; L-threonine biosynthesis; L-threonine from L-aspartate: step 2/5. Its function is as follows. Catalyzes the NADPH-dependent formation of L-aspartate 4-semialdehyde (L-ASA) by the reductive dephosphorylation of 4-phospho-L-aspartate. Mediates the second step in the biosynthesis of amino acids that derive from aspartate (the aspartate family of amino acids), including methioinine and threonine, the latter of which is a precursor to isoleucine. This is Aspartate-semialdehyde dehydrogenase (HOM2) from Saccharomyces cerevisiae (strain ATCC 204508 / S288c) (Baker's yeast).